The following is a 145-amino-acid chain: MSTEKLYSTADLAEELEMTKQGMNQAVKAGRIEAPAYYIGAYKGWTEEQVERIKGKIYEKEQEIKDIVRCIPYGLTPSGSEYLKHNPELALKYLEQAIKECENEMEKVINSDDKKYIGMDIFVGSCKERFEQIRDNLTRNSKNNS.

This is an uncharacterized protein from Bacillus anthracis.